The following is a 145-amino-acid chain: Large ribosomal subunit protein uL11 (145 aa).

The protein belongs to the universal ribosomal protein uL11 family. In terms of assembly, part of the ribosomal stalk of the 50S ribosomal subunit. Interacts with L10 and the large rRNA to form the base of the stalk. L10 forms an elongated spine to which L12 dimers bind in a sequential fashion forming a multimeric L10(L12)X complex. One or more lysine residues are methylated.

Forms part of the ribosomal stalk which helps the ribosome interact with GTP-bound translation factors. This Coxiella burnetii (strain Dugway 5J108-111) protein is Large ribosomal subunit protein uL11.